Consider the following 229-residue polypeptide: Ribose-5-phosphate isomerase A (229 aa).

Substrate is bound by residues 28 to 31 (TGST), 85 to 88 (DGAD), and 98 to 101 (KGRG). Glu107 (proton acceptor) is an active-site residue. Lys125 lines the substrate pocket.

It belongs to the ribose 5-phosphate isomerase family. Homodimer.

It catalyses the reaction aldehydo-D-ribose 5-phosphate = D-ribulose 5-phosphate. Its pathway is carbohydrate degradation; pentose phosphate pathway; D-ribose 5-phosphate from D-ribulose 5-phosphate (non-oxidative stage): step 1/1. Functionally, catalyzes the reversible conversion of ribose-5-phosphate to ribulose 5-phosphate. This Pyrococcus furiosus (strain ATCC 43587 / DSM 3638 / JCM 8422 / Vc1) protein is Ribose-5-phosphate isomerase A.